The chain runs to 28 residues: Odorant-binding protein 1 (28 aa).

It belongs to the calycin superfamily. Lipocalin family. In terms of tissue distribution, nasal mucosa.

The protein localises to the secreted. It is found in the extracellular space. In terms of biological role, this soluble protein may play a specific role in odor discrimination and perception. This Hystrix cristata (North African crested porcupine) protein is Odorant-binding protein 1.